Consider the following 374-residue polypeptide: Type II methyltransferase M.BbvI (374 aa).

Residues 3 to 347 (FRKGELFCGP…EAVLKTFARI (345 aa)) form the SAM-dependent MTase C5-type domain. Cysteine 92 is an active-site residue.

This sequence belongs to the class I-like SAM-binding methyltransferase superfamily. C5-methyltransferase family.

It carries out the reaction a 2'-deoxycytidine in DNA + S-adenosyl-L-methionine = a 5-methyl-2'-deoxycytidine in DNA + S-adenosyl-L-homocysteine + H(+). Its function is as follows. A methylase, recognizes the double-stranded sequence 5'-GCAGC-3', methylates C-2 on both strands, and protects the DNA from cleavage by the BbvI endonuclease. This Brevibacillus brevis (Bacillus brevis) protein is Type II methyltransferase M.BbvI (bbvIM).